The primary structure comprises 398 residues: S-adenosylmethionine synthase (398 aa).

Histidine 16 lines the ATP pocket. A Mg(2+)-binding site is contributed by aspartate 18. Residue glutamate 44 coordinates K(+). Residues glutamate 57 and glutamine 100 each coordinate L-methionine. The interval 100–110 (QSPDIAQGVNE) is flexible loop. ATP contacts are provided by residues 175 to 177 (DAK), 242 to 243 (RF), aspartate 251, 257 to 258 (RK), alanine 274, and lysine 278. L-methionine is bound at residue aspartate 251. An L-methionine-binding site is contributed by lysine 282.

The protein belongs to the AdoMet synthase family. As to quaternary structure, homotetramer; dimer of dimers. Mg(2+) is required as a cofactor. K(+) serves as cofactor.

It is found in the cytoplasm. The catalysed reaction is L-methionine + ATP + H2O = S-adenosyl-L-methionine + phosphate + diphosphate. Its pathway is amino-acid biosynthesis; S-adenosyl-L-methionine biosynthesis; S-adenosyl-L-methionine from L-methionine: step 1/1. Catalyzes the formation of S-adenosylmethionine (AdoMet) from methionine and ATP. The overall synthetic reaction is composed of two sequential steps, AdoMet formation and the subsequent tripolyphosphate hydrolysis which occurs prior to release of AdoMet from the enzyme. The chain is S-adenosylmethionine synthase from Streptococcus agalactiae serotype Ia (strain ATCC 27591 / A909 / CDC SS700).